The chain runs to 324 residues: Acetyl-coenzyme A carboxylase carboxyl transferase subunit alpha (324 aa).

One can recognise a CoA carboxyltransferase C-terminal domain in the interval 44–297; the sequence is LEERAKQLRY…KAALLRNLAE (254 aa).

Belongs to the AccA family. Acetyl-CoA carboxylase is a heterohexamer composed of biotin carboxyl carrier protein (AccB), biotin carboxylase (AccC) and two subunits each of ACCase subunit alpha (AccA) and ACCase subunit beta (AccD).

The protein localises to the cytoplasm. It carries out the reaction N(6)-carboxybiotinyl-L-lysyl-[protein] + acetyl-CoA = N(6)-biotinyl-L-lysyl-[protein] + malonyl-CoA. Its pathway is lipid metabolism; malonyl-CoA biosynthesis; malonyl-CoA from acetyl-CoA: step 1/1. Functionally, component of the acetyl coenzyme A carboxylase (ACC) complex. First, biotin carboxylase catalyzes the carboxylation of biotin on its carrier protein (BCCP) and then the CO(2) group is transferred by the carboxyltransferase to acetyl-CoA to form malonyl-CoA. This is Acetyl-coenzyme A carboxylase carboxyl transferase subunit alpha from Thermosynechococcus vestitus (strain NIES-2133 / IAM M-273 / BP-1).